Here is a 1078-residue protein sequence, read N- to C-terminus: A type blood alpha-D-galactosamine galactosaminidase (1078 aa).

A signal peptide spans 1-26; sequence MRGKKFISLTLSTMLCLQLLPTASFA. Positions 306–570 are glycoside hydrolase 36 domain; it reads PDSSYDLRWE…NNIWYPSAVG (265 aa). Aspartate 463 (nucleophile) is an active-site residue. Aspartate 532 is an active-site residue. The segment at 699–1078 is not required for activity on soluble substrates; that stretch reads PDPEPVDPDY…LDYLTYTTNA (380 aa).

It belongs to the glycosyl hydrolase 36 family.

The enzyme catalyses an alpha-D-galactosaminyl-(1-&gt;3)-[alpha-L-fucosyl-(1-&gt;2)]-beta-D-galactosyl derivative + H2O = D-galactosamine + an alpha-L-fucosyl-(1-&gt;2)-beta-D-galactosyl derivative. In terms of biological role, one of an enzyme pair that work together to convert the A antigen to the H antigen of the O blood type, which together release galactosamine. Catalyzes the second step in the conversion, acts on the product of the first reaction (FpGalNAcDeAc, AC P0DTR4). Is specific for galactosamine containing sugars, does not cleave GalNAc residues. This is A type blood alpha-D-galactosamine galactosaminidase from Flavonifractor plautii (Fusobacterium plautii).